A 283-amino-acid polypeptide reads, in one-letter code: Digeranylgeranylglyceryl phosphate synthase (283 aa).

A run of 8 helical transmembrane segments spans residues 5–27 (VEIIRPGNVIMAIIAVILVAILA), 37–57 (AMLAVFFAMSAGNVINDYFDY), 85–105 (LLFILAAIVGFLISCLVDTWI), 128–148 (PLIGNLTVGFMTGLCFIFAGY), 152–172 (EGLIIYESYLLAFFALIMTTA), 203–223 (AIIAISLIIIDCALCPLLYIY), 228–248 (INYLIVVSIAVLIFLYGAVLL), and 263–283 (LKTGMLIAFIAFAIGTFTITF).

It belongs to the UbiA prenyltransferase family. DGGGP synthase subfamily. Mg(2+) serves as cofactor.

It localises to the cell membrane. It catalyses the reaction sn-3-O-(geranylgeranyl)glycerol 1-phosphate + (2E,6E,10E)-geranylgeranyl diphosphate = 2,3-bis-O-(geranylgeranyl)-sn-glycerol 1-phosphate + diphosphate. Its pathway is membrane lipid metabolism; glycerophospholipid metabolism. Its function is as follows. Prenyltransferase that catalyzes the transfer of the geranylgeranyl moiety of geranylgeranyl diphosphate (GGPP) to the C2 hydroxyl of (S)-3-O-geranylgeranylglyceryl phosphate (GGGP). This reaction is the second ether-bond-formation step in the biosynthesis of archaeal membrane lipids. This chain is Digeranylgeranylglyceryl phosphate synthase, found in Methanobrevibacter smithii (strain ATCC 35061 / DSM 861 / OCM 144 / PS).